Here is an 88-residue protein sequence, read N- to C-terminus: Phosphocarrier protein HPr (88 aa).

The HPr domain occupies 1–88 (MKKFQAVIKD…KACLEKNKVI (88 aa)). The active-site Pros-phosphohistidine intermediate is the His-15. The residue at position 47 (Ser-47) is a Phosphoserine; by HPrK/P.

This sequence belongs to the HPr family.

The protein resides in the cytoplasm. With respect to regulation, phosphorylation on Ser-47 inhibits the phosphoryl transfer from enzyme I to HPr. In terms of biological role, general (non sugar-specific) component of the phosphoenolpyruvate-dependent sugar phosphotransferase system (sugar PTS). This major carbohydrate active-transport system catalyzes the phosphorylation of incoming sugar substrates concomitantly with their translocation across the cell membrane. The phosphoryl group from phosphoenolpyruvate (PEP) is transferred to the phosphoryl carrier protein HPr by enzyme I. Phospho-HPr then transfers it to the PTS EIIA domain. P-Ser-HPr interacts with the catabolite control protein A (CcpA), forming a complex that binds to DNA at the catabolite response elements cre, operator sites preceding a large number of catabolite-regulated genes. Thus, P-Ser-HPr is a corepressor in carbon catabolite repression (CCR), a mechanism that allows bacteria to coordinate and optimize the utilization of available carbon sources. P-Ser-HPr also plays a role in inducer exclusion, in which it probably interacts with several non-PTS permeases and inhibits their transport activity. This is Phosphocarrier protein HPr (ptsH) from Mycoplasma genitalium (strain ATCC 33530 / DSM 19775 / NCTC 10195 / G37) (Mycoplasmoides genitalium).